Reading from the N-terminus, the 171-residue chain is Large ribosomal subunit protein uL10 (171 aa).

The protein belongs to the universal ribosomal protein uL10 family. As to quaternary structure, part of the ribosomal stalk of the 50S ribosomal subunit. The N-terminus interacts with L11 and the large rRNA to form the base of the stalk. The C-terminus forms an elongated spine to which L12 dimers bind in a sequential fashion forming a multimeric L10(L12)X complex.

Functionally, forms part of the ribosomal stalk, playing a central role in the interaction of the ribosome with GTP-bound translation factors. The polypeptide is Large ribosomal subunit protein uL10 (Paramagnetospirillum magneticum (strain ATCC 700264 / AMB-1) (Magnetospirillum magneticum)).